A 138-amino-acid chain; its full sequence is Actin-related protein 2/3 complex subunit 5 (138 aa).

The tract at residues 1–21 is disordered; that stretch reads MNYEDDNVESGQAGKSDAEYK.

It belongs to the ARPC5 family. In terms of assembly, component of the Arp2/3 complex composed of arpB/Arp2, arpC/Arp3, arcA/p41-arc, arcB/p34-arc, arcC/p21-arc, arcD/p20-arc and arcE/p16-arc. Interacts with carmil (via the region between the LRR domain and COOH-terminal proline-rich domain); carmil is required for Arp2/3-dependent actin nucleation. Arp2/3 complex, MyoB, MyoC, and the alpha and beta subunits of capping protein all form a larger complex with carmil.

The protein localises to the cytoplasm. It localises to the cytoskeleton. The protein resides in the cytosol. It is found in the cell cortex. Its subcellular location is the cell projection. The protein localises to the pseudopodium. Functions as a component of the Arp2/3 complex which is involved in regulation of actin polymerization and together with an activating nucleation-promoting factor (NPF) mediates the formation of branched actin networks. Seems to contact the pointed end of the daughter actin filament. The Arp2/3 complex is involved in organizing the actin system in cell motility and chemotaxis, in phagocytosis and macropinocytosis, at late steps of endosome processing, and in mitosis. In concert with a group of other proteins, the Arp2/3 complex plays a general role in the rapid activation and adaptation of the actin system to its multiple functions. The chain is Actin-related protein 2/3 complex subunit 5 (arcE) from Dictyostelium discoideum (Social amoeba).